A 162-amino-acid polypeptide reads, in one-letter code: Regulator of sigma D (162 aa).

The protein belongs to the Rsd/AlgQ family. In terms of assembly, interacts with RpoD.

Its subcellular location is the cytoplasm. In terms of biological role, binds RpoD and negatively regulates RpoD-mediated transcription activation by preventing the interaction between the primary sigma factor RpoD with the catalytic core of the RNA polymerase and with promoter DNA. May be involved in replacement of the RNA polymerase sigma subunit from RpoD to RpoS during the transition from exponential growth to the stationary phase. The chain is Regulator of sigma D from Salmonella choleraesuis (strain SC-B67).